The chain runs to 340 residues: DNA-directed RNA polymerase subunit alpha (340 aa).

The alpha N-terminal domain (alpha-NTD) stretch occupies residues 1 to 233 (MIQDEIPIPV…DLFIIFLNME (233 aa)). The interval 264-340 (AKEVAFKQIF…QLPKDQFNIS (77 aa)) is alpha C-terminal domain (alpha-CTD).

The protein belongs to the RNA polymerase alpha chain family. In plastids the minimal PEP RNA polymerase catalytic core is composed of four subunits: alpha, beta, beta', and beta''. When a (nuclear-encoded) sigma factor is associated with the core the holoenzyme is formed, which can initiate transcription.

The protein resides in the plastid. It is found in the chloroplast. The catalysed reaction is RNA(n) + a ribonucleoside 5'-triphosphate = RNA(n+1) + diphosphate. DNA-dependent RNA polymerase catalyzes the transcription of DNA into RNA using the four ribonucleoside triphosphates as substrates. The protein is DNA-directed RNA polymerase subunit alpha of Psilotum nudum (Whisk fern).